The following is a 746-amino-acid chain: MASEVIVISDHARKEAGTVSVFPVLIHTDYARVIEDVRKVEDQFNSEMKTSIDTKTTADFPELGLAHVTAFTIPYCRPDRLSIMTRLTEITFFNDDYYDDAGVEKILDYNNHLRECFGGRAEDELTKASAVTKSKQLQASVLVEMHYIDSELARDMMLTYNRILEVTSLGKNAGLKSLDEYLPFRIGNSGIEVYQDMSCFGMGVKLTKEEKEKLDPIVIAAHNSTTLINDYHSWPKEVRKYFNEVQATGKADLPVNAVCIFMQTEGLSEQASRQRVREEIIAQQKSHLAMIQDLVEQEGPLPEKYYMYFKAAQYTASGSEYWAAITSRYPTKTELNQPEVIIVDGELKYESSEIQQTPKQIATTFNGIPESAKSIIESKVNGTSAHIPDIRHSPADGAQTHHLISDGQFREVINGHANVHTNGKANGTSQGEDLEVYEVTTGNFQRAPEDTVLAPYQYIASLPSKNIRNKFIDALNLWLGVPPLALSSIKRIVEYLHHSSLMLDDIEDNSTLRRGKPCTHMLYGNAQTINAANYAFVSAFAEVQNLQSPSAITIFIREVQNMHRGQSLDLSWKYHTHCPTVDEYMMMVDNKTGAMFRLCVQLMQAESSVPCQKITQSDFITQLGRYFQIRDDYQNLVSSEYTTQKGFCEDLDEGKISLPLIYTIMDSSPEASVVKGIFHHRLREGGLPLHLKEYILSQMEEKGALSATHSLLQKMQKELIEGLHRVEETFGSKNALVELMLRRLWV.

Positions 1-336 (MASEVIVISD…SRYPTKTELN (336 aa)) are sesterterpenoid synthase. D95 contacts Mg(2+). A geranylfarnesyl diphosphate synthase region spans residues 338 to 746 (PEVIIVDGEL…VELMLRRLWV (409 aa)). Positions 465, 468, and 497 each coordinate isopentenyl diphosphate. Residues D504 and D508 each contribute to the Mg(2+) site. R513 contributes to the dimethylallyl diphosphate binding site. R514 provides a ligand contact to isopentenyl diphosphate. Dimethylallyl diphosphate contacts are provided by K591, T592, Q628, N635, and K645.

In the N-terminal section; belongs to the terpene synthase family. It in the C-terminal section; belongs to the FPP/GGPP synthase family. Requires Mg(2+) as cofactor.

It carries out the reaction isopentenyl diphosphate + (2E,6E)-farnesyl diphosphate = (2E,6E,10E)-geranylgeranyl diphosphate + diphosphate. The enzyme catalyses (2E,6E,10E,14E)-geranylfarnesyl diphosphate = quiannulatene + diphosphate. Its pathway is secondary metabolite biosynthesis; terpenoid biosynthesis. Its function is as follows. Bifunctional sesterterpene synthase; part of the gene cluster that mediates the biosynthesis of the pentacyclic sesterterpene quiannulatic acid. The first step of the pathway is performed by the sesterterpene synthase (QS) that possesses both prenyl transferase and terpene cyclase activity, converting isopentenyl diphosphate and dimethylallyl diphosphate into geranylfarnesyl diphosphate (GFPP) and further converting GFPP into quiannulatene via an unprecedented cyclization mode which involves three rounds of hydride shifts and two successive C-C bond migrations to construct the 5-6-5-5-5 fused ring. The cytochrome P450 monooxygenase Qnn-P450 then oxidizes quiannulatene at C-19 in 3 successive reactions to afford quiannulatic acid. The polypeptide is Quiannulatene synthase (Emericella variicolor (Aspergillus stellatus)).